The primary structure comprises 1134 residues: Vinculin (1134 aa).

Residues 1-835 form an N-terminal globular head region; that stretch reads MPVFHTRTIE…GAVAKVREAF (835 aa). The residue at position 97 (S97) is a Phosphoserine. The tract at residues 168 to 208 is talin-interaction; sequence MTKMAKMIDERQQELTHQEHRVMLVNSMNTVKELLPVLISA. K173 is subject to N6-acetyllysine. 3 consecutive repeat copies span residues 259–369, 370–479, and 480–589. A 3 X 112 AA tandem repeats region spans residues 259–589; that stretch reads ASKDTEAMKR…LKDLKARMQE (331 aa). 7 positions are modified to phosphoserine: S260, S272, S275, S288, S290, S346, and S434. At K496 the chain carries N6-acetyllysine. Y537 carries the post-translational modification Phosphotyrosine. Phosphoserine occurs at positions 574, 579, and 600. Phosphothreonine is present on residues T604 and T672. S721 is modified (phosphoserine). The interval 741–764 is interaction with ACTN4; that stretch reads MANIQPQMLVAGATSIARRANRIL. Phosphoserine is present on residues S795 and S809. The residue at position 822 (Y822) is a Phosphotyrosine. Residues 836-878 form a linker (Pro-rich) region; the sequence is QPQEPDFPPPPPDLEQLRLTDELAPPKPPLPEGEVPPPRPPPP. The segment at 857–887 is disordered; it reads ELAPPKPPLPEGEVPPPRPPPPEEKDEEFPE. Positions 860 to 876 are enriched in pro residues; it reads PPKPPLPEGEVPPPRPP. A C-terminal tail region spans residues 879-1134; it reads EEKDEEFPEQ…RWVRKTPWYQ (256 aa). Facilitates phospholipid membrane insertion stretches follow at residues 1003–1046 and 1120–1134; these read RLVR…KRIR and AGFT…PWYQ. A Phosphotyrosine; by SRC-type Tyr-kinases modification is found at Y1133.

It belongs to the vinculin/alpha-catenin family. As to quaternary structure, exhibits self-association properties. Part of a complex composed of THSD1, PTK2/FAK1, TLN1 and VCL. Interacts with APBB1IP and NRAP. Interacts with TLN1. Interacts with CTNNB1 and this interaction is necessary for its localization to the cell-cell junctions and for its function in regulating cell surface expression of E-cadherin. Interacts with SYNM. Interacts with SORBS1. Interacts with CTNNA1. Binds to ACTN4; this interaction triggers conformational changes. Interacts with FLII. (Microbial infection) Interacts via its globular head domain with the central portion of S.flexneri IcsA (also called VirG). Phosphorylated; on serines, threonines and tyrosines. Phosphorylation on Tyr-1133 in activated platelets affects head-tail interactions and cell spreading but has no effect on actin binding nor on localization to focal adhesion plaques. In terms of processing, acetylated; mainly by myristic acid but also by a small amount of palmitic acid. Metavinculin is muscle-specific.

It is found in the cell membrane. The protein localises to the cell junction. It localises to the adherens junction. The protein resides in the focal adhesion. Its subcellular location is the cytoplasm. It is found in the cytoskeleton. The protein localises to the sarcolemma. It localises to the cell projection. The protein resides in the podosome. Actin filament (F-actin)-binding protein involved in cell-matrix adhesion and cell-cell adhesion. Regulates cell-surface E-cadherin expression and potentiates mechanosensing by the E-cadherin complex. May also play important roles in cell morphology and locomotion. The sequence is that of Vinculin (VCL) from Homo sapiens (Human).